Consider the following 84-residue polypeptide: Putative glutaredoxin MT3292 (84 aa).

A Glutaredoxin domain is found at 1 to 84 (MITAALTIYT…VKAKLVKIAG (84 aa)).

The protein is Putative glutaredoxin MT3292 of Mycobacterium tuberculosis (strain CDC 1551 / Oshkosh).